The primary structure comprises 811 residues: Lysine-specific histone demethylase 1 homolog 3 (811 aa).

Residues 1 to 10 (MSDQPPPYTP) are compositionally biased toward pro residues. The tract at residues 1–79 (MSDQPPPYTP…PSAQPPPRAS (79 aa)) is disordered. The segment covering 44–55 (NKRKRTGFRRKL) has biased composition (basic residues). Positions 56 to 71 (PSGSPAAPVAVAASPS) are enriched in low complexity. The 102-residue stretch at 88–189 (NREPTAEAVT…FGVAPAIKER (102 aa)) folds into the SWIRM domain. FAD is bound by residues E227, R229, R235, and E609. The tract at residues 790 to 811 (RNSSRTKTRPSKLKIGIPKSKS) is disordered.

It belongs to the flavin monoamine oxidase family. It depends on FAD as a cofactor.

Its function is as follows. Probable histone demethylase. In Oryza sativa subsp. indica (Rice), this protein is Lysine-specific histone demethylase 1 homolog 3.